We begin with the raw amino-acid sequence, 657 residues long: LIM and SH3 domain protein Lasp (657 aa).

The LIM zinc-binding domain maps to 3-63 (KTCARCQKVV…EAHIPKAKAT (61 aa)). Nebulin repeat units lie at residues 64–95 (AIAD…KAKG) and 96–130 (KFTQ…KKAA). Disordered regions lie at residues 130 to 151 (AMEK…EYFS), 164 to 223 (PTAS…PIQH), 235 to 257 (YQQL…QLHD), 294 to 318 (LYPT…QQQA), 332 to 415 (NSHH…SAAS), and 460 to 528 (KQHA…PKRI). Over residues 140–150 (VSDSSNESEYF) the composition is skewed to polar residues. Low complexity-rich tracts occupy residues 172–215 (AATT…QQQT) and 236–254 (QQLQ…QQQQ). The span at 332–341 (NSHHPSGNSV) shows a compositional bias: polar residues. A compositionally biased stretch (low complexity) spans 342–357 (DQYDQPQQQQHQPQQQ). Residues 358 to 370 (STNPTLVAAQQQQ) are compositionally biased toward polar residues. Residues 371–403 (SHHSLLNNNASNGGISHSHHSNINNNGHGSQNQ) are compositionally biased toward low complexity. Residues 460 to 475 (KQHASNGHMPNQQQQH) are compositionally biased toward polar residues. Phosphoserine is present on residues S505 and S530. The segment at 548–592 (EQAHQQQKHQQYYQQVQMMQQQEHPPQQQQMRQQPSYSSLQEKQS) is disordered. The segment covering 549–586 (QAHQQQKHQQYYQQVQMMQQQEHPPQQQQMRQQPSYSS) has biased composition (low complexity). Positions 596–657 (TAMRVYRAIY…PANYVEQAVI (62 aa)) constitute an SH3 domain.

Interacts with osk.

The protein is LIM and SH3 domain protein Lasp of Drosophila melanogaster (Fruit fly).